We begin with the raw amino-acid sequence, 256 residues long: Ubiquinone/menaquinone biosynthesis C-methyltransferase UbiE (256 aa).

The span at 1 to 12 shows a compositional bias: basic and acidic residues; the sequence is MNDQRKGDHAEP. A disordered region spans residues 1–23; it reads MNDQRKGDHAEPTTHFGYQDVPE. Residues T79, D100, and 128–129 contribute to the S-adenosyl-L-methionine site; that span reads DA.

It belongs to the class I-like SAM-binding methyltransferase superfamily. MenG/UbiE family.

It catalyses the reaction a 2-demethylmenaquinol + S-adenosyl-L-methionine = a menaquinol + S-adenosyl-L-homocysteine + H(+). The enzyme catalyses a 2-methoxy-6-(all-trans-polyprenyl)benzene-1,4-diol + S-adenosyl-L-methionine = a 5-methoxy-2-methyl-3-(all-trans-polyprenyl)benzene-1,4-diol + S-adenosyl-L-homocysteine + H(+). The protein operates within quinol/quinone metabolism; menaquinone biosynthesis; menaquinol from 1,4-dihydroxy-2-naphthoate: step 2/2. It participates in cofactor biosynthesis; ubiquinone biosynthesis. Methyltransferase required for the conversion of demethylmenaquinol (DMKH2) to menaquinol (MKH2) and the conversion of 2-polyprenyl-6-methoxy-1,4-benzoquinol (DDMQH2) to 2-polyprenyl-3-methyl-6-methoxy-1,4-benzoquinol (DMQH2). The sequence is that of Ubiquinone/menaquinone biosynthesis C-methyltransferase UbiE from Pseudomonas putida (strain ATCC 700007 / DSM 6899 / JCM 31910 / BCRC 17059 / LMG 24140 / F1).